Here is a 285-residue protein sequence, read N- to C-terminus: Complement C1q tumor necrosis factor-related protein 2 (285 aa).

A signal peptide spans 1-15; that stretch reads MIPWVLLACALPCAA. Residues 33–144 are disordered; the sequence is QLVCSLPGPQ…PGLPGPCSCG (112 aa). The Collagen-like domain maps to 40-141; sequence GPQGPPGPPG…KGEPGLPGPC (102 aa). A compositionally biased stretch (pro residues) spans 41–51; that stretch reads PQGPPGPPGAP. The span at 53–65 shows a compositional bias: low complexity; that stretch reads PSGMMGRMGFPGK. Positions 66–78 are enriched in basic and acidic residues; that stretch reads DGQDGHDGDRGDS. The segment covering 84 to 120 has biased composition (low complexity); that stretch reads PGRTGNRGKPGPKGKAGAIGRAGPRGPKGVNGTPGKH. The region spanning 145–281 is the C1q domain; it reads SGHTKSAFSV…GFLIYADQDD (137 aa).

May interact with ERFE. In terms of tissue distribution, expressed in adipose tissue.

It is found in the secreted. Functionally, involved in the regulation of lipid metabolism in adipose tissue and liver. The polypeptide is Complement C1q tumor necrosis factor-related protein 2 (C1QTNF2) (Homo sapiens (Human)).